The chain runs to 734 residues: Polyribonucleotide nucleotidyltransferase (734 aa).

The Mg(2+) site is built by D505 and D511. Positions 572-631 (PKLTTIQIPVDAIGMVIGKGGETIRSITEETGAEINIEDDGTVTIASASGEGASAALETI) constitute a KH domain. Residues 641-715 (GTVYSGKVRD…GKTRFALSIK (75 aa)) enclose the S1 motif domain.

This sequence belongs to the polyribonucleotide nucleotidyltransferase family. It depends on Mg(2+) as a cofactor.

The protein localises to the cytoplasm. The catalysed reaction is RNA(n+1) + phosphate = RNA(n) + a ribonucleoside 5'-diphosphate. Functionally, involved in mRNA degradation. Catalyzes the phosphorolysis of single-stranded polyribonucleotides processively in the 3'- to 5'-direction. The chain is Polyribonucleotide nucleotidyltransferase from Prosthecochloris aestuarii (strain DSM 271 / SK 413).